The following is a 483-amino-acid chain: MKGLVIRISVALALLLWAVDMVFPWQQIIRSEANHYEAIQERGTLVVGTINNSVSYFIDPNGNPAGLEYDLSKSFADYLGVELEIKSLDNSDALFDALQNNKIDIAAANLLHQQRYQKQFQFGPAYTSASWQLVYRKGKDKPRSLTQLSAKDKLVITQSEELLNILSAQQKKQPTLSWQINSLLSQEALLLQVAEGKIDYTIANSIDVSAAQQIKPEIAVAFDITDEADVHWYLPSSSYSELQAALLDFMNGAIENGLIARIEEKYFSHIAQFDYVDIKSYTNAIEKILPKYTALFKKYQGELDWRLLAAVAYQESHWNEDATSPTGVRGIMMLTKATADRMKINDRTDAEQSIKAGSEYLHWLISQVPNSVPQEDKIWYALTAYNMGLGHMLDVRRLTKSLGGDPDNWLEVKKNLPLLAEKQYYSKLKYGYARGYEAFQYVENIRRYMNSIINYHRVRDDQISRPLEKVTDSIMITPQNSQD.

An N-terminal signal peptide occupies residues 1-18 (MKGLVIRISVALALLLWA). The segment at 19-270 (VDMVFPWQQI…RIEEKYFSHI (252 aa)) is non-LT domain. The tract at residues 272 to 483 (QFDYVDIKSY…IMITPQNSQD (212 aa)) is LT domain. Residue glutamate 315 is part of the active site.

The protein in the N-terminal section; belongs to the bacterial solute-binding protein 3 family. This sequence in the C-terminal section; belongs to the transglycosylase Slt family.

It localises to the cell outer membrane. It catalyses the reaction Exolytic cleavage of the (1-&gt;4)-beta-glycosidic linkage between N-acetylmuramic acid (MurNAc) and N-acetylglucosamine (GlcNAc) residues in peptidoglycan, from either the reducing or the non-reducing ends of the peptidoglycan chains, with concomitant formation of a 1,6-anhydrobond in the MurNAc residue.. Its function is as follows. Murein-degrading enzyme that degrades murein glycan strands and insoluble, high-molecular weight murein sacculi, with the concomitant formation of a 1,6-anhydromuramoyl product. Lytic transglycosylases (LTs) play an integral role in the metabolism of the peptidoglycan (PG) sacculus. Their lytic action creates space within the PG sacculus to allow for its expansion as well as for the insertion of various structures such as secretion systems and flagella. This Actinobacillus succinogenes (strain ATCC 55618 / DSM 22257 / CCUG 43843 / 130Z) protein is Membrane-bound lytic murein transglycosylase F.